A 141-amino-acid polypeptide reads, in one-letter code: MYKHILVAVDLSEESLILLRKGAGLAEKCGAKLSLIHVDVNFSDLYTGLIDINMSSVQDGVIEETTKALDELALKIDYPVSQRLNGTGDFSQVLEEAVAKYQIDLLITGHHQDFWSKFMSSTRQVMNNVTVDMLVVPLIDE.

This sequence belongs to the universal stress protein A family. As to quaternary structure, homodimer.

The protein resides in the cytoplasm. In terms of biological role, required for resistance to DNA-damaging agents. The polypeptide is Universal stress protein A homolog (uspA) (Haemophilus ducreyi (strain 35000HP / ATCC 700724)).